Here is a 137-residue protein sequence, read N- to C-terminus: Crustacean calcium-binding protein 23 (137 aa).

3 EF-hand domains span residues 27–48 (RDSS…FGLD), 62–97 (EKKA…KVVK), and 100–135 (ATEE…YSGL).

Monomer or disulfide-linked dimers.

Possibly acts as a regulatory protein and not as a calcium buffer or transport protein. In Homarus americanus (American lobster), this protein is Crustacean calcium-binding protein 23.